Here is a 43-residue protein sequence, read N- to C-terminus: Protein PsbN (43 aa).

Residues 7–27 (VAIFISGLLVSFTGYALYTAF) form a helical membrane-spanning segment.

Belongs to the PsbN family.

It is found in the plastid. It localises to the chloroplast thylakoid membrane. In terms of biological role, may play a role in photosystem I and II biogenesis. The chain is Protein PsbN from Sagittaria latifolia (Broadleaf arrowhead).